Reading from the N-terminus, the 529-residue chain is hal-like protein DDB_G0273787/DDB_G0273081 (529 aa).

Residues 151-153 (ASG) constitute a cross-link (5-imidazolinone (Ala-Gly)). Residue Ser-152 is modified to 2,3-didehydroalanine (Ser).

This sequence belongs to the PAL/histidase family. In terms of processing, contains an active site 4-methylidene-imidazol-5-one (MIO), which is formed autocatalytically by cyclization and dehydration of residues Ala-Ser-Gly.

The protein resides in the cytoplasm. It catalyses the reaction L-histidine = trans-urocanate + NH4(+). It functions in the pathway amino-acid degradation; L-histidine degradation into L-glutamate; N-formimidoyl-L-glutamate from L-histidine: step 1/3. The protein is hal-like protein DDB_G0273787/DDB_G0273081 of Dictyostelium discoideum (Social amoeba).